The primary structure comprises 440 residues: Chitinase-like protein Idgf2 (440 aa).

The first 20 residues, 1–20, serve as a signal peptide directing secretion; sequence MKAWIWFTFVACLFAASTEA. The region spanning 22-440 is the GH18 domain; that stretch reads SNLVCYYDSS…PILRAIKYRL (419 aa). Residues Cys-26 and Cys-53 are joined by a disulfide bond. N-linked (GlcNAc...) asparagine glycosylation is present at Asn-220. Cys-342 and Cys-425 are disulfide-bonded.

It belongs to the glycosyl hydrolase 18 family. IDGF subfamily. Glycosylated. Primarily expressed in yolk cells and fat body. In larvae, it is expressed in the imaginal ring and weakly expressed in imaginal disks. More strongly expressed than Idgf1 and Idgf3.

Its subcellular location is the secreted. Functionally, cooperates with insulin-like peptides to stimulate the proliferation, polarization and motility of imaginal disk cells. May act by stabilizing the binding of insulin-like peptides to its receptor through a simultaneous interaction with both molecules to form a multiprotein signaling complex. The protein is Chitinase-like protein Idgf2 (Idgf2) of Drosophila melanogaster (Fruit fly).